The primary structure comprises 866 residues: Translation initiation factor IF-2 (866 aa).

Disordered stretches follow at residues Met-1–Gln-63 and Val-92–Ser-257. Polar residues predominate over residues Glu-26 to His-36. Basic and acidic residues predominate over residues Val-92–Arg-135. Low complexity-rich tracts occupy residues Val-152–Gln-164 and Pro-179–Pro-197. The tr-type G domain maps to Ser-365–Asp-533. Residues Gly-374–Thr-381 form a G1 region. GTP is bound at residue Gly-374 to Thr-381. Positions Gly-399 to His-403 are G2. The tract at residues Asp-421–Gly-424 is G3. GTP-binding positions include Asp-421 to His-425 and Asn-475 to Asp-478. Residues Asn-475 to Asp-478 form a G4 region. A G5 region spans residues Ser-511 to Lys-513.

Belongs to the TRAFAC class translation factor GTPase superfamily. Classic translation factor GTPase family. IF-2 subfamily.

The protein localises to the cytoplasm. Its function is as follows. One of the essential components for the initiation of protein synthesis. Protects formylmethionyl-tRNA from spontaneous hydrolysis and promotes its binding to the 30S ribosomal subunits. Also involved in the hydrolysis of GTP during the formation of the 70S ribosomal complex. The polypeptide is Translation initiation factor IF-2 (Rhodospirillum rubrum (strain ATCC 11170 / ATH 1.1.1 / DSM 467 / LMG 4362 / NCIMB 8255 / S1)).